The sequence spans 298 residues: Acetyl-coenzyme A carboxylase carboxyl transferase subunit beta (298 aa).

The region spanning 41 to 298 (PTIECPECHA…RIVSKLMNLP (258 aa)) is the CoA carboxyltransferase N-terminal domain. Zn(2+)-binding residues include Cys45, Cys48, Cys64, and Cys67. Residues 45-67 (CPECHALVTRTAIAFNAYVCPSC) form a C4-type zinc finger.

The protein belongs to the AccD/PCCB family. Acetyl-CoA carboxylase is a heterohexamer composed of biotin carboxyl carrier protein (AccB), biotin carboxylase (AccC) and two subunits each of ACCase subunit alpha (AccA) and ACCase subunit beta (AccD). Zn(2+) serves as cofactor.

The protein localises to the cytoplasm. The enzyme catalyses N(6)-carboxybiotinyl-L-lysyl-[protein] + acetyl-CoA = N(6)-biotinyl-L-lysyl-[protein] + malonyl-CoA. It functions in the pathway lipid metabolism; malonyl-CoA biosynthesis; malonyl-CoA from acetyl-CoA: step 1/1. Its function is as follows. Component of the acetyl coenzyme A carboxylase (ACC) complex. Biotin carboxylase (BC) catalyzes the carboxylation of biotin on its carrier protein (BCCP) and then the CO(2) group is transferred by the transcarboxylase to acetyl-CoA to form malonyl-CoA. The sequence is that of Acetyl-coenzyme A carboxylase carboxyl transferase subunit beta from Acinetobacter baylyi (strain ATCC 33305 / BD413 / ADP1).